Reading from the N-terminus, the 562-residue chain is Putative transport protein YE1478 (562 aa).

Helical transmembrane passes span 8 to 28, 32 to 52, 66 to 86, 94 to 114, 118 to 138, and 158 to 178; these read LLNGNYILLLFVVLALGLCLG, LGPIQLGNAIGVLVVSLLLGQ, FMLFIFCVGVEAGPNFFSIFF, MLALVMVGSAMVLALGLGKLF, IGLTAGMLAGSMTSTPVLVGA, and NLSLGYALTYLIGLVSLILGA. RCK C-terminal domains lie at 202-288 and 290-373; these read LDTD…SFRN and KEVF…KIGF. 5 consecutive transmembrane segments (helical) span residues 383-403, 406-426, 447-467, 475-495, and 541-561; these read LLAFCAFFILGLMIGLITFQF, FSFGIGNAAGLLMAGIMLGFL, FGLMVFMAGVGLSAGGGINSS, MLISGLIVSLVPVVICFIFGA, and IANVLLTLAGSLIVIVWPGIL.

This sequence belongs to the AAE transporter (TC 2.A.81) family. YbjL subfamily.

It localises to the cell membrane. The chain is Putative transport protein YE1478 from Yersinia enterocolitica serotype O:8 / biotype 1B (strain NCTC 13174 / 8081).